The chain runs to 419 residues: Hyaluronidase-3 (419 aa).

The N-terminal stretch at 1 to 16 is a signal peptide; that stretch reads MTMQLGLALVLGVAMC. Intrachain disulfides connect Cys-42/Cys-331, Cys-205/Cys-220, Cys-356/Cys-367, Cys-361/Cys-395, and Cys-397/Cys-406. The N-linked (GlcNAc...) asparagine glycan is linked to Asn-69. The active-site Proton donor is the Glu-129. N-linked (GlcNAc...) asparagine glycosylation is present at Asn-215. The 56-residue stretch at 352–407 folds into the EGF-like domain; the sequence is AAMACSHQRCHGHGRCAWQDPGQLKVFLHLHPGGSPGAWESFSCRCYWGWAGPTCQ.

Belongs to the glycosyl hydrolase 56 family. Post-translationally, N-glycosylated. In terms of tissue distribution, highly expressed in bladder, spleen and liver. Expressed at low levels in the kidney.

It localises to the secreted. Its subcellular location is the cell membrane. The protein resides in the cytoplasmic vesicle. The protein localises to the secretory vesicle. It is found in the acrosome. It localises to the endoplasmic reticulum. Its subcellular location is the early endosome. It catalyses the reaction Random hydrolysis of (1-&gt;4)-linkages between N-acetyl-beta-D-glucosamine and D-glucuronate residues in hyaluronate.. Facilitates sperm penetration into the layer of cumulus cells surrounding the egg by digesting hyaluronic acid. Involved in induction of the acrosome reaction in the sperm. Involved in follicular atresia, the breakdown of immature ovarian follicles that are not selected to ovulate. Induces ovarian granulosa cell apoptosis, possibly via apoptotic signaling pathway involving CASP8 and CASP3 activation, and poly(ADP-ribose) polymerase (PARP) cleavage. Has no hyaluronidase activity in embryonic fibroblasts in vitro. Has no hyaluronidase activity in granulosa cells in vitro. The polypeptide is Hyaluronidase-3 (HYAL3) (Sus scrofa (Pig)).